The sequence spans 323 residues: Transcription factor LUX (323 aa).

Disordered regions lie at residues 1–25, 53–139, and 267–298; these read MGEE…WEMG, ERSR…DLSG, and GYHH…ESNP. Low complexity predominate over residues 65–87; the sequence is SETTLSSLRGGSSGPNTSSSNNN. The myb-like GARP DNA-binding region spans 139–200; that stretch reads GKTLKRPRLV…HLQKYRLYLK (62 aa).

As to quaternary structure, interacts with ELF3 and forms a complex with ELF3 and ELF4.

The protein resides in the nucleus. Transcription factor that is essential for the generation of the circadian clock oscillation. Is necessary for activation of CCA1 and LHY expression. Is coregulated with TOC1 and seems to be repressed by CCA1 and LHY by direct binding of these proteins to the evening element in the LUX promoter. Directly regulates the expression of PRR9, a major component of the morning transcriptional feedback circuit, by binding specific sites on PRR9 promoter. Binds to its own promoter, inducing a negative auto-regulatory feedback loop within the core clock. Binds to ELF3 and associates with ELF4 in a diurnal complex which is required for the expression of the growth-promoting transcription factors PIF4 and PIF5 and subsequent hypocotyl growth in the early evening. The polypeptide is Transcription factor LUX (LUX) (Arabidopsis thaliana (Mouse-ear cress)).